Here is a 223-residue protein sequence, read N- to C-terminus: HTH-type transcriptional dual regulator CecR (223 aa).

The HTH tetR-type domain maps to 11–70; the sequence is EQAKKQLIAAALAQFGEYGMNATTREIAAQAGQNIAAITYYFGSKEDLYLACAQWIADFI. Positions 33 to 52 form a DNA-binding region, H-T-H motif; sequence TTREIAAQAGQNIAAITYYF.

It localises to the cytoplasm. Its function is as follows. Regulates transcription of the cecR-ybhGFSR operon and the rhlE gene, which altogether are involved in the control of sensitivity to cefoperazone and chloramphenicol. Represses the cecR-ybhGFSR operon and activates the rhlE operon. Acts by binding to a palindromic sequence within the intergenic spacer located between these two divergently transcribed operons. In Shigella flexneri, this protein is HTH-type transcriptional dual regulator CecR.